Here is a 64-residue protein sequence, read N- to C-terminus: uncharacterized protein (64 aa).

This is an uncharacterized protein from Saccharomyces cerevisiae (strain ATCC 204508 / S288c) (Baker's yeast).